The following is a 376-amino-acid chain: 26S proteasome non-ATPase regulatory subunit 4 (376 aa).

The 184-residue stretch at 5 to 188 folds into the VWFA domain; the sequence is STMVCVDNSE…LADALISSPI (184 aa). A Glycyl lysine isopeptide (Lys-Gly) (interchain with G-Cter in SUMO2) cross-link involves residue Lys-122. The segment at 197–262 is interaction with UBQLN1; that stretch reads LGLGASDFEF…TEDSDDALLK (66 aa). In terms of domain architecture, UIM 1 spans 211-230; that stretch reads SADPELALALRVSMEEQRQR. Residues 224–237 are compositionally biased toward basic and acidic residues; it reads MEEQRQRQEEEARR. A disordered region spans residues 224–257; sequence MEEQRQRQEEEARRAAAASAAEAGIATPGTEDSD. 2 positions are modified to phosphothreonine: Thr-250 and Thr-253. Residues Ser-256 and Ala-259 each carry the phosphoserine modification. Positions 282–301 constitute a UIM 2 domain; sequence TEEEQIAYAMQMSLQGTEFS. Residues 355-376 are disordered; it reads MGALASQATKDGKNDKKEEEKK. Position 360 is a phosphoserine (Ser-360). The segment covering 364–376 has biased composition (basic and acidic residues); it reads KDGKNDKKEEEKK.

The protein belongs to the proteasome subunit S5A family. Component of the 19S proteasome regulatory particle complex. The 26S proteasome consists of a 20S core particle (CP) and two 19S regulatory subunits (RP). The regulatory particle is made of a lid composed of 9 subunits, a base containing 6 ATPases and few additional components including PSMD4. Interacts with NUB1. Interacts with SQSTM1. Interacts with UBQLN4. Interacts with UBE3A. Interacts with UBQLN1 (via ubiquitin-like domain). Interacts with DDI2. In terms of tissue distribution, isoform Rpn10A is ubiquitous whereas isoform Rpn10E is mostly expressed in the embryonic brain.

Its function is as follows. Component of the 26S proteasome, a multiprotein complex involved in the ATP-dependent degradation of ubiquitinated proteins. This complex plays a key role in the maintenance of protein homeostasis by removing misfolded or damaged proteins, which could impair cellular functions, and by removing proteins whose functions are no longer required. Therefore, the proteasome participates in numerous cellular processes, including cell cycle progression, apoptosis, or DNA damage repair. PSMD4 acts as an ubiquitin receptor subunit through ubiquitin-interacting motifs and selects ubiquitin-conjugates for destruction. Displays a preferred selectivity for longer polyubiquitin chains. This is 26S proteasome non-ATPase regulatory subunit 4 (Psmd4) from Mus musculus (Mouse).